A 539-amino-acid polypeptide reads, in one-letter code: Cytochrome P450 monooxygenase pvhE (539 aa).

A helical transmembrane segment spans residues 15–31 (VAFCSLVILCILFKVLT). Residue Asn-379 is glycosylated (N-linked (GlcNAc...) asparagine). Cys-473 is a binding site for heme.

This sequence belongs to the cytochrome P450 family. Heme is required as a cofactor.

It localises to the membrane. The protein operates within secondary metabolite biosynthesis. In terms of biological role, cytochrome P450 monooxygenase; part of the gene cluster that mediates the biosynthesis of varicidin A, an antifungal natural product containing a cis-octahydrodecalin core. The PKS module of pvhA together with the enoylreductase pvhC catalyze the formation of the polyketide unit which is then conjugated to L-isoleucine by the condensation domain of the NRPS module. Activity of the Dieckmann cyclase domain (RED) of pvhA results in release of an acyclic tetramate. The cytochrome P450 monooxygenase pvhE then catalyzes the oxidation of the C21 methyl group to a to carboxylate group. The methyltransferase pvhD then further methylates the pvhE product. The Diels-Alderase pvhB is able to catalyze Diels-Alder cycloaddition using both pvhE and pvhD products as substrates to form the decalin ring, yielding varicidin B and A, respectively. The sequence is that of Cytochrome P450 monooxygenase pvhE from Talaromyces variabilis (Penicillium variabile).